The primary structure comprises 116 residues: Immunoglobulin heavy variable 3-66 (116 aa).

The first 19 residues, M1–C19, serve as a signal peptide directing secretion. A framework-1 region spans residues E20–S44. The Ig-like domain occupies E20–R116. Cysteines 41 and 114 form a disulfide. The segment at G45–Y52 is complementarity-determining-1. A framework-2 region spans residues M53–V69. The interval I70 to T76 is complementarity-determining-2. Residues Y77–C114 form a framework-3 region. A complementarity-determining-3 region spans residues A115–R116.

In terms of assembly, immunoglobulins are composed of two identical heavy chains and two identical light chains; disulfide-linked.

Its subcellular location is the secreted. The protein localises to the cell membrane. Its function is as follows. V region of the variable domain of immunoglobulin heavy chains that participates in the antigen recognition. Immunoglobulins, also known as antibodies, are membrane-bound or secreted glycoproteins produced by B lymphocytes. In the recognition phase of humoral immunity, the membrane-bound immunoglobulins serve as receptors which, upon binding of a specific antigen, trigger the clonal expansion and differentiation of B lymphocytes into immunoglobulins-secreting plasma cells. Secreted immunoglobulins mediate the effector phase of humoral immunity, which results in the elimination of bound antigens. The antigen binding site is formed by the variable domain of one heavy chain, together with that of its associated light chain. Thus, each immunoglobulin has two antigen binding sites with remarkable affinity for a particular antigen. The variable domains are assembled by a process called V-(D)-J rearrangement and can then be subjected to somatic hypermutations which, after exposure to antigen and selection, allow affinity maturation for a particular antigen. The polypeptide is Immunoglobulin heavy variable 3-66 (Homo sapiens (Human)).